The following is a 327-amino-acid chain: Putative ABC transporter ATP-binding protein MM_0887 (327 aa).

The segment at 1-44 (MSKSTPLKSSIIRADLPEQAEGRTGPETGKDPEKTGNSEGKTDT) is disordered. Residues 28–44 (TGKDPEKTGNSEGKTDT) show a composition bias toward basic and acidic residues. One can recognise an ABC transporter domain in the interval 47 to 282 (IEIKDLCHRY…PALLRKAHLR (236 aa)). 81–88 (GANGAGKS) contacts ATP.

The protein belongs to the ABC transporter superfamily.

It is found in the cell membrane. Functionally, probably part of an ABC transporter complex. Responsible for energy coupling to the transport system. This chain is Putative ABC transporter ATP-binding protein MM_0887, found in Methanosarcina mazei (strain ATCC BAA-159 / DSM 3647 / Goe1 / Go1 / JCM 11833 / OCM 88) (Methanosarcina frisia).